Reading from the N-terminus, the 572-residue chain is Proline--tRNA ligase (572 aa).

It belongs to the class-II aminoacyl-tRNA synthetase family. ProS type 1 subfamily. Homodimer.

It localises to the cytoplasm. The catalysed reaction is tRNA(Pro) + L-proline + ATP = L-prolyl-tRNA(Pro) + AMP + diphosphate. Functionally, catalyzes the attachment of proline to tRNA(Pro) in a two-step reaction: proline is first activated by ATP to form Pro-AMP and then transferred to the acceptor end of tRNA(Pro). As ProRS can inadvertently accommodate and process non-cognate amino acids such as alanine and cysteine, to avoid such errors it has two additional distinct editing activities against alanine. One activity is designated as 'pretransfer' editing and involves the tRNA(Pro)-independent hydrolysis of activated Ala-AMP. The other activity is designated 'posttransfer' editing and involves deacylation of mischarged Ala-tRNA(Pro). The misacylated Cys-tRNA(Pro) is not edited by ProRS. The protein is Proline--tRNA ligase of Yersinia pseudotuberculosis serotype IB (strain PB1/+).